Here is a 392-residue protein sequence, read N- to C-terminus: Chorismate synthase (392 aa).

Positions 40 and 46 each coordinate NADP(+). FMN contacts are provided by residues 129–131 (RSS), 257–258 (QA), Gly302, 317–321 (KPIAT), and Arg343.

It belongs to the chorismate synthase family. As to quaternary structure, homotetramer. FMNH2 serves as cofactor.

The enzyme catalyses 5-O-(1-carboxyvinyl)-3-phosphoshikimate = chorismate + phosphate. It functions in the pathway metabolic intermediate biosynthesis; chorismate biosynthesis; chorismate from D-erythrose 4-phosphate and phosphoenolpyruvate: step 7/7. Its function is as follows. Catalyzes the anti-1,4-elimination of the C-3 phosphate and the C-6 proR hydrogen from 5-enolpyruvylshikimate-3-phosphate (EPSP) to yield chorismate, which is the branch point compound that serves as the starting substrate for the three terminal pathways of aromatic amino acid biosynthesis. This reaction introduces a second double bond into the aromatic ring system. This Chloroherpeton thalassium (strain ATCC 35110 / GB-78) protein is Chorismate synthase.